A 205-amino-acid chain; its full sequence is Large ribosomal subunit protein uL4 (205 aa).

It belongs to the universal ribosomal protein uL4 family. Part of the 50S ribosomal subunit.

Functionally, one of the primary rRNA binding proteins, this protein initially binds near the 5'-end of the 23S rRNA. It is important during the early stages of 50S assembly. It makes multiple contacts with different domains of the 23S rRNA in the assembled 50S subunit and ribosome. Its function is as follows. Forms part of the polypeptide exit tunnel. The polypeptide is Large ribosomal subunit protein uL4 (Ruegeria sp. (strain TM1040) (Silicibacter sp.)).